The primary structure comprises 344 residues: Meiotic recombination protein DMC1 homolog A (344 aa).

133–140 provides a ligand contact to ATP; the sequence is GEFRSGKT. Arg-235 is a binding site for dsDNA. SsDNA is bound by residues Arg-235, Phe-238, Arg-241, Arg-247, and Arg-315. The dsDNA site is built by Arg-241 and Arg-247.

Belongs to the RecA family. DMC1 subfamily. Expressed in pollen mother cells and root tips.

It is found in the nucleus. Functionally, recombinase that may participate in meiotic recombination, specifically in homologous strand assimilation, which is required for the resolution of meiotic double-strand breaks. Exhibits DNA-dependent ATPase activity when bound to single-stranded DNA (ssDNA). Mediates renaturation of homologous complementary strands as well as assimilation of single strands into homologous supercoiled duplexes leading to D-loop formation. Binds circular single-stranded DNA (ssDNA) and circular double-stranded DNA (dsDNA) in vitro. Catalyzes DNA homologous renaturation and DNA strand exchange. The rates of these activities are dependent on the state of ATP hydrolysis. Forms helical filaments along ssDNA and dsDNA, and promotes strand exchange between ssDNA and dsDNA with long DNA substrates of several thousand base pairs. The presence of the replication protein A is not required for this activity. Seems to be required for homologous pairing and subsequent chromosome segregation during male meiosis. May be not directly required for homologous pairing during male meiosis. Required for synaptonemal complex assembly and crossover formation. Functions redundantly with DMC1B. The chain is Meiotic recombination protein DMC1 homolog A from Oryza sativa subsp. indica (Rice).